The chain runs to 162 residues: Peptide deformylase (162 aa).

2 residues coordinate Fe cation: Cys86 and His128. The active site involves Glu129. Residue His132 participates in Fe cation binding.

It belongs to the polypeptide deformylase family. It depends on Fe(2+) as a cofactor.

The catalysed reaction is N-terminal N-formyl-L-methionyl-[peptide] + H2O = N-terminal L-methionyl-[peptide] + formate. Functionally, removes the formyl group from the N-terminal Met of newly synthesized proteins. Requires at least a dipeptide for an efficient rate of reaction. N-terminal L-methionine is a prerequisite for activity but the enzyme has broad specificity at other positions. This is Peptide deformylase from Treponema pallidum (strain Nichols).